Reading from the N-terminus, the 411-residue chain is Metal-binding regulatory protein cuf1 (411 aa).

The copper-fist DNA-binding region spans 1 to 40 (MVVINNVKMACMKCIRGHRSSTCKHNDRELFPIRPKGRPI). The Zn(2+) site is built by cysteine 11, cysteine 14, cysteine 23, and histidine 25. The segment at 63–92 (SRKKGSKCSTSSTTDLDSSSASNSSCSIPS) is disordered. The segment covering 69-92 (KCSTSSTTDLDSSSASNSSCSIPS) has biased composition (low complexity).

The protein resides in the cytoplasm. It localises to the nucleus. In terms of biological role, copper-sensing transcription factor that regulates iron uptake genes. Under copper starvation conditions activates the transcription of the copper transport genes, ctr4, ctr5 and ctr6. The polypeptide is Metal-binding regulatory protein cuf1 (cuf1) (Schizosaccharomyces pombe (strain 972 / ATCC 24843) (Fission yeast)).